Reading from the N-terminus, the 291-residue chain is Ribonuclease Z (291 aa).

The Zn(2+) site is built by His-61, His-63, Asp-65, His-66, His-133, Asp-201, and His-257. Asp-65 (proton acceptor) is an active-site residue.

This sequence belongs to the RNase Z family. As to quaternary structure, homodimer. Zn(2+) serves as cofactor.

The catalysed reaction is Endonucleolytic cleavage of RNA, removing extra 3' nucleotides from tRNA precursor, generating 3' termini of tRNAs. A 3'-hydroxy group is left at the tRNA terminus and a 5'-phosphoryl group is left at the trailer molecule.. Its function is as follows. Zinc phosphodiesterase, which displays some tRNA 3'-processing endonuclease activity. Probably involved in tRNA maturation, by removing a 3'-trailer from precursor tRNA. In Saccharolobus islandicus (strain Y.N.15.51 / Yellowstone #2) (Sulfolobus islandicus), this protein is Ribonuclease Z.